Here is a 155-residue protein sequence, read N- to C-terminus: Probable Brix domain-containing ribosomal biogenesis protein (155 aa).

The 155-residue stretch at 1 to 155 (MLITSSRKPS…KNYRKMVMSE (155 aa)) folds into the Brix domain.

Probably involved in the biogenesis of the ribosome. The sequence is that of Probable Brix domain-containing ribosomal biogenesis protein from Methanococcoides burtonii (strain DSM 6242 / NBRC 107633 / OCM 468 / ACE-M).